The primary structure comprises 269 residues: Energy-coupling factor transporter ATP-binding protein EcfA1 (269 aa).

One can recognise an ABC transporter domain in the interval 8-242; that stretch reads IVFKNVSFQY…AEGLTTIGLD (235 aa). 42 to 49 is a binding site for ATP; that stretch reads GHNGSGKS.

This sequence belongs to the ABC transporter superfamily. Energy-coupling factor EcfA family. In terms of assembly, forms a stable energy-coupling factor (ECF) transporter complex composed of 2 membrane-embedded substrate-binding proteins (S component), 2 ATP-binding proteins (A component) and 2 transmembrane proteins (T component).

The protein localises to the cell membrane. In terms of biological role, ATP-binding (A) component of a common energy-coupling factor (ECF) ABC-transporter complex. Unlike classic ABC transporters this ECF transporter provides the energy necessary to transport a number of different substrates. The chain is Energy-coupling factor transporter ATP-binding protein EcfA1 from Staphylococcus aureus (strain bovine RF122 / ET3-1).